The sequence spans 137 residues: Flagellar basal body rod protein FlgB (137 aa).

The protein belongs to the flagella basal body rod proteins family. In terms of assembly, the basal body constitutes a major portion of the flagellar organelle and consists of a number of rings mounted on a central rod. In Gram-negative bacteria, at least four rings, L, P, S and M are present, whereas Gram-positive bacteria lack the L and P rings. The rod consists of about 26 subunits of FlgG in the distal portion, and FlgB, FlgC and FlgF build up the proximal portion of the rod with about 6 subunits each. Rod assembly occurs by export via the flagellum-specific pathway of its constituent proteins and by their incorporation into the rod structure in the probable order of FlgB, FlgC, FlgF and FlgG. Another protein, FliE, also assembles onto the stable rod structure.

It is found in the bacterial flagellum basal body. Structural component of flagellum, the bacterial motility apparatus. Part of the rod structure of flagellar basal body. The sequence is that of Flagellar basal body rod protein FlgB from Yersinia ruckeri.